The following is a 262-amino-acid chain: Ribose-5-phosphate isomerase A (262 aa).

Residues threonine 33–threonine 36, aspartate 89–aspartate 92, and lysine 102–glycine 105 contribute to the substrate site. The Proton acceptor role is filled by glutamate 111. Lysine 129 contributes to the substrate binding site.

It belongs to the ribose 5-phosphate isomerase family. In terms of assembly, homodimer.

It carries out the reaction aldehydo-D-ribose 5-phosphate = D-ribulose 5-phosphate. It functions in the pathway carbohydrate degradation; pentose phosphate pathway; D-ribose 5-phosphate from D-ribulose 5-phosphate (non-oxidative stage): step 1/1. Functionally, catalyzes the reversible conversion of ribose-5-phosphate to ribulose 5-phosphate. The polypeptide is Ribose-5-phosphate isomerase A (Cereibacter sphaeroides (strain ATCC 17029 / ATH 2.4.9) (Rhodobacter sphaeroides)).